The primary structure comprises 445 residues: Phosphoglucosamine mutase 1 (445 aa).

Ser102 (phosphoserine intermediate) is an active-site residue. The Mg(2+) site is built by Ser102, Asp241, Asp243, and Asp245. Ser102 carries the phosphoserine modification.

The protein belongs to the phosphohexose mutase family. It depends on Mg(2+) as a cofactor. Activated by phosphorylation.

The enzyme catalyses alpha-D-glucosamine 1-phosphate = D-glucosamine 6-phosphate. Its function is as follows. Catalyzes the conversion of glucosamine-6-phosphate to glucosamine-1-phosphate. This Shewanella baltica (strain OS185) protein is Phosphoglucosamine mutase 1.